Reading from the N-terminus, the 67-residue chain is Large ribosomal subunit protein bL35 (67 aa).

Belongs to the bacterial ribosomal protein bL35 family.

The protein is Large ribosomal subunit protein bL35 of Deinococcus geothermalis (strain DSM 11300 / CIP 105573 / AG-3a).